The chain runs to 85 residues: UPF0181 protein YPTS_1774 (85 aa).

Positions aspartate 57–aspartate 72 are enriched in basic and acidic residues. The tract at residues aspartate 57–glycine 85 is disordered. The span at glutamate 73–glycine 85 shows a compositional bias: acidic residues.

This sequence belongs to the UPF0181 family.

In Yersinia pseudotuberculosis serotype IB (strain PB1/+), this protein is UPF0181 protein YPTS_1774.